A 405-amino-acid polypeptide reads, in one-letter code: Argininosuccinate synthase (405 aa).

ATP-binding positions include 10–18 (AYSGGLDTS) and alanine 37. Tyrosine 88 and serine 93 together coordinate L-citrulline. ATP is bound at residue glycine 118. The L-aspartate site is built by threonine 120, asparagine 124, and aspartate 125. Asparagine 124 lines the L-citrulline pocket. Residues arginine 128, serine 179, serine 188, glutamate 264, and tyrosine 276 each contribute to the L-citrulline site.

Belongs to the argininosuccinate synthase family. Type 1 subfamily. Homotetramer.

It is found in the cytoplasm. It catalyses the reaction L-citrulline + L-aspartate + ATP = 2-(N(omega)-L-arginino)succinate + AMP + diphosphate + H(+). The protein operates within amino-acid biosynthesis; L-arginine biosynthesis; L-arginine from L-ornithine and carbamoyl phosphate: step 2/3. The sequence is that of Argininosuccinate synthase from Pseudomonas fluorescens (strain SBW25).